The chain runs to 212 residues: Cytidylate kinase (212 aa).

7–15 serves as a coordination point for ATP; the sequence is GPAASGKGT.

The protein belongs to the cytidylate kinase family. Type 1 subfamily.

The protein localises to the cytoplasm. The catalysed reaction is CMP + ATP = CDP + ADP. It carries out the reaction dCMP + ATP = dCDP + ADP. The protein is Cytidylate kinase of Rhodopseudomonas palustris (strain BisB5).